Reading from the N-terminus, the 133-residue chain is Egg protein CP422 (133 aa).

Residues 1–21 (MHECMIVFFIFAVVSIYYADA) form the signal peptide. 3 disulfide bridges follow: C107/C121, C114/C125, and C120/C130.

Its subcellular location is the secreted. This Schistosoma japonicum (Blood fluke) protein is Egg protein CP422 (CP422).